The chain runs to 274 residues: Imidazole glycerol phosphate synthase subunit HisF (274 aa).

Catalysis depends on residues aspartate 11 and aspartate 134.

It belongs to the HisA/HisF family. In terms of assembly, heterodimer of HisH and HisF.

Its subcellular location is the cytoplasm. It catalyses the reaction 5-[(5-phospho-1-deoxy-D-ribulos-1-ylimino)methylamino]-1-(5-phospho-beta-D-ribosyl)imidazole-4-carboxamide + L-glutamine = D-erythro-1-(imidazol-4-yl)glycerol 3-phosphate + 5-amino-1-(5-phospho-beta-D-ribosyl)imidazole-4-carboxamide + L-glutamate + H(+). It functions in the pathway amino-acid biosynthesis; L-histidine biosynthesis; L-histidine from 5-phospho-alpha-D-ribose 1-diphosphate: step 5/9. In terms of biological role, IGPS catalyzes the conversion of PRFAR and glutamine to IGP, AICAR and glutamate. The HisF subunit catalyzes the cyclization activity that produces IGP and AICAR from PRFAR using the ammonia provided by the HisH subunit. The polypeptide is Imidazole glycerol phosphate synthase subunit HisF (Methanosphaera stadtmanae (strain ATCC 43021 / DSM 3091 / JCM 11832 / MCB-3)).